The sequence spans 860 residues: DNA mismatch repair protein MutS (860 aa).

Position 608–615 (608–615) interacts with ATP; sequence GPNMAGKS.

Belongs to the DNA mismatch repair MutS family.

In terms of biological role, this protein is involved in the repair of mismatches in DNA. It is possible that it carries out the mismatch recognition step. This protein has a weak ATPase activity. This Borrelia turicatae (strain 91E135) protein is DNA mismatch repair protein MutS.